The sequence spans 399 residues: Stomatin-like protein 1 (399 aa).

A Tyrosine-type lysosomal sorting signal motif is present at residues 6–10 (GYRAL). Serine 28 is modified (phosphoserine). Residues 58–78 (LVSVLGFLLLLLTFPISGWFA) traverse the membrane as a helical; Signal-anchor for type III membrane protein segment. At 79 to 399 (LKIVPTYERM…KLEAVLKALK (321 aa)) the chain is on the cytoplasmic side. The SCP2 domain maps to 288–399 (KQPVAEGLLT…KLEAVLKALK (112 aa)).

Belongs to the band 7/mec-2 family. As to quaternary structure, interacts with STOM; may redistribute STOM from the plasma membrane to late endosomes. Expressed in dorsal root ganglion neurons.

The protein localises to the membrane. Its subcellular location is the cytoplasmic vesicle. It is found in the cell membrane. The protein resides in the late endosome membrane. It localises to the membrane raft. Functionally, may play a role in cholesterol transfer to late endosomes. May play a role in modulating membrane acid-sensing ion channels. Can specifically inhibit proton-gated current of ASIC1 isoform 1. Can increase inactivation speed of ASIC3. May be involved in regulation of proton sensing in dorsal root ganglions. The polypeptide is Stomatin-like protein 1 (Stoml1) (Mus musculus (Mouse)).